Consider the following 361-residue polypeptide: Deoxyhypusine hydroxylase (361 aa).

4 HEAT-like PBS-type repeats span residues 59–85, 94–120, 183–211, and 216–242; these read LKHELAYVLGQLLNTRALPTLSRVLEN, VRHEAAEALGAIGAEESLPILRKYMQD, QRYRAMFALRDFGAGSKEAVEALADGFRD, and FRHEIAYIFGQLSSPYSIPSLLSRLRD. Positions 61, 62, 96, and 97 each coordinate Fe cation. Fe cation is bound by residues histidine 218, glutamate 219, histidine 251, and glutamate 252.

This sequence belongs to the deoxyhypusine hydroxylase family. It depends on Fe(2+) as a cofactor.

Its subcellular location is the cytoplasm. The protein resides in the nucleus. The enzyme catalyses [eIF5A protein]-deoxyhypusine + AH2 + O2 = [eIF5A protein]-hypusine + A + H2O. It functions in the pathway protein modification; eIF5A hypusination. Functionally, catalyzes the hydroxylation of the N(6)-(4-aminobutyl)-L-lysine intermediate to form hypusine, an essential post-translational modification only found in mature eIF-5A factor. This chain is Deoxyhypusine hydroxylase, found in Cryptococcus neoformans var. neoformans serotype D (strain B-3501A) (Filobasidiella neoformans).